A 476-amino-acid polypeptide reads, in one-letter code: Aspartyl/glutamyl-tRNA(Asn/Gln) amidotransferase subunit B (476 aa).

Belongs to the GatB/GatE family. GatB subfamily. Heterotrimer of A, B and C subunits.

It carries out the reaction L-glutamyl-tRNA(Gln) + L-glutamine + ATP + H2O = L-glutaminyl-tRNA(Gln) + L-glutamate + ADP + phosphate + H(+). It catalyses the reaction L-aspartyl-tRNA(Asn) + L-glutamine + ATP + H2O = L-asparaginyl-tRNA(Asn) + L-glutamate + ADP + phosphate + 2 H(+). In terms of biological role, allows the formation of correctly charged Asn-tRNA(Asn) or Gln-tRNA(Gln) through the transamidation of misacylated Asp-tRNA(Asn) or Glu-tRNA(Gln) in organisms which lack either or both of asparaginyl-tRNA or glutaminyl-tRNA synthetases. The reaction takes place in the presence of glutamine and ATP through an activated phospho-Asp-tRNA(Asn) or phospho-Glu-tRNA(Gln). This is Aspartyl/glutamyl-tRNA(Asn/Gln) amidotransferase subunit B from Listeria monocytogenes serovar 1/2a (strain ATCC BAA-679 / EGD-e).